A 268-amino-acid chain; its full sequence is Phosphatidylglycerol--prolipoprotein diacylglyceryl transferase (268 aa).

Transmembrane regions (helical) follow at residues 14–34 (LGPI…FAGW), 57–77 (LTFY…IIFY), 90–110 (FFLW…LIAF), and 117–137 (IGAN…IGLG). Position 140 (Arg140) interacts with a 1,2-diacyl-sn-glycero-3-phospho-(1'-sn-glycerol). 3 helical membrane passes run 174-194 (QLFE…LVTI), 200-220 (YLVL…CEFF), and 238-258 (GQIL…AVFI).

It belongs to the Lgt family.

It is found in the cell inner membrane. It catalyses the reaction L-cysteinyl-[prolipoprotein] + a 1,2-diacyl-sn-glycero-3-phospho-(1'-sn-glycerol) = an S-1,2-diacyl-sn-glyceryl-L-cysteinyl-[prolipoprotein] + sn-glycerol 1-phosphate + H(+). Its pathway is protein modification; lipoprotein biosynthesis (diacylglyceryl transfer). Its function is as follows. Catalyzes the transfer of the diacylglyceryl group from phosphatidylglycerol to the sulfhydryl group of the N-terminal cysteine of a prolipoprotein, the first step in the formation of mature lipoproteins. This chain is Phosphatidylglycerol--prolipoprotein diacylglyceryl transferase, found in Francisella tularensis subsp. mediasiatica (strain FSC147).